The sequence spans 179 residues: Inner membrane-spanning protein YciB (179 aa).

Helical transmembrane passes span 22–42 (IYAATSALIVATAIVLIYSWV), 50–70 (MALITFVLVAVFGGLTLFFHN), 76–96 (WKVTVIYALFAGALLISQWVM), 121–141 (LAWALFFIACGLANIYIAFWL), and 149–169 (FKVFGLTALTLIFTLLSGVYI).

The protein belongs to the YciB family.

Its subcellular location is the cell inner membrane. Plays a role in cell envelope biogenesis, maintenance of cell envelope integrity and membrane homeostasis. In Salmonella agona (strain SL483), this protein is Inner membrane-spanning protein YciB.